Consider the following 189-residue polypeptide: Segregation and condensation protein B (189 aa).

The protein belongs to the ScpB family. In terms of assembly, homodimer. Homodimerization may be required to stabilize the binding of ScpA to the Smc head domains. Component of a cohesin-like complex composed of ScpA, ScpB and the Smc homodimer, in which ScpA and ScpB bind to the head domain of Smc. The presence of the three proteins is required for the association of the complex with DNA.

Its subcellular location is the cytoplasm. Participates in chromosomal partition during cell division. May act via the formation of a condensin-like complex containing Smc and ScpA that pull DNA away from mid-cell into both cell halves. This Lachnoclostridium phytofermentans (strain ATCC 700394 / DSM 18823 / ISDg) (Clostridium phytofermentans) protein is Segregation and condensation protein B.